The following is a 102-amino-acid chain: Nucleoid-associated protein BCc_301 (102 aa).

Belongs to the YbaB/EbfC family. In terms of assembly, homodimer.

It localises to the cytoplasm. The protein localises to the nucleoid. Functionally, binds to DNA and alters its conformation. May be involved in regulation of gene expression, nucleoid organization and DNA protection. The chain is Nucleoid-associated protein BCc_301 from Buchnera aphidicola subsp. Cinara cedri (strain Cc).